The chain runs to 230 residues: TPR repeat-containing protein BB_0298 (230 aa).

2 TPR repeats span residues 69–102 and 183–216; these read ARFF…NPNN and FEFL…ASTE.

The protein is TPR repeat-containing protein BB_0298 of Borreliella burgdorferi (strain ATCC 35210 / DSM 4680 / CIP 102532 / B31) (Borrelia burgdorferi).